Reading from the N-terminus, the 127-residue chain is Aspartate 1-decarboxylase (127 aa).

Serine 25 serves as the catalytic Schiff-base intermediate with substrate; via pyruvic acid. At serine 25 the chain carries Pyruvic acid (Ser). Threonine 57 is a substrate binding site. The Proton donor role is filled by tyrosine 58. 73 to 75 (GAA) serves as a coordination point for substrate.

Belongs to the PanD family. As to quaternary structure, heterooctamer of four alpha and four beta subunits. Requires pyruvate as cofactor. Is synthesized initially as an inactive proenzyme, which is activated by self-cleavage at a specific serine bond to produce a beta-subunit with a hydroxyl group at its C-terminus and an alpha-subunit with a pyruvoyl group at its N-terminus.

It localises to the cytoplasm. It catalyses the reaction L-aspartate + H(+) = beta-alanine + CO2. The protein operates within cofactor biosynthesis; (R)-pantothenate biosynthesis; beta-alanine from L-aspartate: step 1/1. In terms of biological role, catalyzes the pyruvoyl-dependent decarboxylation of aspartate to produce beta-alanine. The polypeptide is Aspartate 1-decarboxylase (Neisseria meningitidis serogroup B (strain ATCC BAA-335 / MC58)).